The chain runs to 73 residues: Small ribosomal subunit protein bS18 (73 aa).

Belongs to the bacterial ribosomal protein bS18 family. Part of the 30S ribosomal subunit. Forms a tight heterodimer with protein bS6.

In terms of biological role, binds as a heterodimer with protein bS6 to the central domain of the 16S rRNA, where it helps stabilize the platform of the 30S subunit. This is Small ribosomal subunit protein bS18 from Prochlorococcus marinus (strain MIT 9313).